Consider the following 444-residue polypeptide: Serine carboxypeptidase 2 (444 aa).

60–62 is a binding site for substrate; sequence NGG. 3 cysteine pairs are disulfide-bonded: C65-C324, C222-C234, and C258-C291. N-linked (GlcNAc...) asparagine glycosylation is found at N116 and N127. Residue 157-159 participates in substrate binding; it reads ESY. S158 is an active-site residue. A glycan (N-linked (GlcNAc...) asparagine) is linked at N259. Residues 260 to 286 constitute a propeptide, linker peptide; that stretch reads ITSSSSSSSSSLSQQRRSRGRYPWLTG. 2 N-linked (GlcNAc...) asparagine glycosylation sites follow: N312 and N318. Catalysis depends on residues D361 and H413. Residue 409–413 participates in substrate binding; it reads RGAGH.

The protein belongs to the peptidase S10 family. In terms of assembly, carboxypeptidase II is a dimer, where each monomer is composed of two chains linked by a disulfide bond. Post-translationally, N-glycosylated.

It catalyses the reaction Preferential release of a C-terminal arginine or lysine residue.. The chain is Serine carboxypeptidase 2 (CBP2) from Triticum aestivum (Wheat).